The chain runs to 1960 residues: Transcription factor 20 (1960 aa).

The segment covering 1–18 has biased composition (polar residues); that stretch reads MQSFREQSSYHGNQQSYP. Residues 1 to 287 are disordered; the sequence is MQSFREQSSY…GSNAQAYGTQ (287 aa). Gly residues predominate over residues 42 to 60; it reads GGTGGSSGSSGSGSGGGRR. R60 carries the post-translational modification Omega-N-methylarginine. Over residues 61-75 the composition is skewed to low complexity; it reads GAAAAAAAMASETSG. Residues 122 to 131 show a composition bias toward polar residues; that stretch reads QGSSFGNQYG. Positions 164–192 are enriched in low complexity; that stretch reads SAQYQQQASSQQQQQQVQQLRQQLYQSHQ. Residues 193 to 219 show a composition bias toward polar residues; that stretch reads PLPQATGQPASSSSHLQPMQRPSTLPS. A compositionally biased stretch (low complexity) spans 236-259; the sequence is QSSASSSSSSSFPSPQRFSQSGQS. Composition is skewed to polar residues over residues 260-270 and 277-287; these read YDGSYNVNAGS and VGSNAQAYGTQ. Residue K304 forms a Glycyl lysine isopeptide (Lys-Gly) (interchain with G-Cter in SUMO2) linkage. Disordered regions lie at residues 305–328 and 360–392; these read IPQGTQQGQQQQQPQQQQHPSQHV and FHQNFSPISNPSPAASVVQSPSCSSTPSPLMQT. Low complexity-rich tracts occupy residues 306–322 and 368–388; these read PQGTQQGQQQQQPQQQQ and SNPSPAASVVQSPSCSSTPSP. 2 positions are modified to phosphoserine: S419 and S430. The disordered stretch occupies residues 476–748; the sequence is SDALTPQKKT…HGERKGRNEK (273 aa). 2 stretches are compositionally biased toward polar residues: residues 497–508 and 537–547; these read SCTNSEGSSQPE and LSGQSTSSDTT. Residues S538, S559, S574, and S583 each carry the phosphoserine modification. K602 carries the post-translational modification N6-acetyllysine. Residues 616–628 are compositionally biased toward basic and acidic residues; that stretch reads RVEKPGGQDKGSQ. S640 bears the Phosphoserine mark. Residues 665 to 677 show a composition bias toward low complexity; it reads GNKNGDNNSNHNG. A compositionally biased stretch (polar residues) spans 693–702; it reads TSRTEPSKSP. Residues K710, K733, K748, K823, K832, and K844 each participate in a glycyl lysine isopeptide (Lys-Gly) (interchain with G-Cter in SUMO2) cross-link. Residues 732 to 748 show a composition bias toward basic and acidic residues; that stretch reads EKGDFTGHGERKGRNEK. S871 carries the phosphoserine modification. Residues K920 and K922 each participate in a glycyl lysine isopeptide (Lys-Gly) (interchain with G-Cter in SUMO2) cross-link. Residues 920–1037 form a disordered region; that stretch reads KLKSQSGQIK…GDPHHMNPHM (118 aa). K929 is covalently cross-linked (Glycyl lysine isopeptide (Lys-Gly) (interchain with G-Cter in SUMO1); alternate). K929 is covalently cross-linked (Glycyl lysine isopeptide (Lys-Gly) (interchain with G-Cter in SUMO2); alternate). Polar residues predominate over residues 936-945; sequence SKSQASFNNK. The segment covering 946–961 has biased composition (basic and acidic residues); it reads KSGDHCHPPSIKHESY. K957 is covalently cross-linked (Glycyl lysine isopeptide (Lys-Gly) (interchain with G-Cter in SUMO2)). Phosphoserine occurs at positions 966 and 1005. Residue K1015 forms a Glycyl lysine isopeptide (Lys-Gly) (interchain with G-Cter in SUMO2) linkage. R1024 bears the Omega-N-methylarginine mark. A Phosphoserine modification is found at S1053. Residues K1086, K1098, K1137, K1173, K1178, K1183, K1210, K1231, K1267, and K1274 each participate in a glycyl lysine isopeptide (Lys-Gly) (interchain with G-Cter in SUMO2) cross-link. 3 disordered regions span residues 1110–1142, 1162–1285, and 1303–1331; these read AAAQHRQEGPRKSPRQQQFLDRVRSPLKNDKDG, RCLM…GRLL, and SHSQDIKSIPKRDSSKDLPSPDSRNCPAV. Residues 1130–1142 show a composition bias toward basic and acidic residues; that stretch reads DRVRSPLKNDKDG. Positions 1170 to 1191 are leucine-zipper; that stretch reads LPNKGMELKHGSQKLQESCWDL. The short motif at 1254–1268 is the Nuclear localization signal element; it reads RRRVRSFISPIPSKR. The span at 1304–1318 shows a compositional bias: basic and acidic residues; that stretch reads HSQDIKSIPKRDSSK. S1305 is subject to Phosphoserine. A Glycyl lysine isopeptide (Lys-Gly) (interchain with G-Cter in SUMO2) cross-link involves residue K1309. S1335 is modified (phosphoserine). Residue K1338 forms a Glycyl lysine isopeptide (Lys-Gly) (interchain with G-Cter in SUMO2) linkage. Residue S1361 is modified to Phosphoserine. A disordered region spans residues 1384-1607; it reads DILSLKSGPP…TKQAVPIVEP (224 aa). Residues K1389, K1409, K1428, and K1446 each participate in a glycyl lysine isopeptide (Lys-Gly) (interchain with G-Cter in SUMO2) cross-link. Residues 1424-1451 show a composition bias toward basic and acidic residues; it reads LHVEKPLPRSSEEWRGSVDDKVKTETHA. The segment covering 1464–1477 has biased composition (polar residues); it reads MTSTTSQKPGSNQG. Residue K1510 forms a Glycyl lysine isopeptide (Lys-Gly) (interchain with G-Cter in SUMO2) linkage. S1522 is modified (phosphoserine). K1524 participates in a covalent cross-link: Glycyl lysine isopeptide (Lys-Gly) (interchain with G-Cter in SUMO2). The segment at residues 1537–1551 is a DNA-binding region (a.T hook); sequence GKKKGRPIGSVNKQK. A compositionally biased stretch (pro residues) spans 1555–1566; it reads QPPPPPPQPPQI. Positions 1576 to 1600 match the Nuclear localization signal motif; the sequence is KPKKQRQRRERRKPGAQPRKRKTKQ. A compositionally biased stretch (basic residues) spans 1578–1599; the sequence is KKQRQRRERRKPGAQPRKRKTK. K1613 is covalently cross-linked (Glycyl lysine isopeptide (Lys-Gly) (interchain with G-Cter in SUMO2)). Disordered regions lie at residues 1660 to 1683 and 1732 to 1839; these read LVRGRKGQRSLTPPPSSTESKALP and TLPK…PELE. Phosphoserine is present on S1669. 3 positions are modified to phosphothreonine: T1671, T1762, and T1764. Residues 1785 to 1792 carry the Nuclear localization signal motif; the sequence is RFKRRHRS. The C2HC pre-PHD-type; degenerate zinc-finger motif lies at 1829 to 1865; that stretch reads PTTSEGGPELELQIPELPLDSNEFWVHEGCILWANGI. The PHD-type zinc-finger motif lies at 1885 to 1933; the sequence is MKCSHCQEAGATLGCYNKGCSFRYHYPCAIDADCLLHEENFSVRCPKHK. The tract at residues 1939-1960 is disordered; that stretch reads PLPPLQNKTAKGSLSTEQSERG. A compositionally biased stretch (polar residues) spans 1944-1960; it reads QNKTAKGSLSTEQSERG.

As to quaternary structure, homodimer. Interacts with RNF4 and JUN. Expressed in most tissues, except in ovary and prostate. Isoform 1 is exclusively expressed in brain, heart and testis, and this form predominates in liver and kidney. Isoform 2 predominates in lung.

It is found in the nucleus. Its function is as follows. Transcriptional activator that binds to the regulatory region of MMP3 and thereby controls stromelysin expression. It stimulates the activity of various transcriptional activators such as JUN, SP1, PAX6 and ETS1, suggesting a function as a coactivator. This chain is Transcription factor 20 (TCF20), found in Homo sapiens (Human).